We begin with the raw amino-acid sequence, 945 residues long: Alanine--tRNA ligase (945 aa).

The Zn(2+) site is built by His564, His568, Cys666, and His670. The disordered stretch occupies residues 911–945 (SGGGRPDMAQAGGKDASKLPEALQQARETMTEKLG).

This sequence belongs to the class-II aminoacyl-tRNA synthetase family. Requires Zn(2+) as cofactor.

The protein resides in the cytoplasm. The enzyme catalyses tRNA(Ala) + L-alanine + ATP = L-alanyl-tRNA(Ala) + AMP + diphosphate. In terms of biological role, catalyzes the attachment of alanine to tRNA(Ala) in a two-step reaction: alanine is first activated by ATP to form Ala-AMP and then transferred to the acceptor end of tRNA(Ala). Also edits incorrectly charged Ser-tRNA(Ala) and Gly-tRNA(Ala) via its editing domain. The sequence is that of Alanine--tRNA ligase from Rhodopirellula baltica (strain DSM 10527 / NCIMB 13988 / SH1).